The chain runs to 431 residues: RbAp48-related WD40 repeat-containing protein prw1 (431 aa).

WD repeat units lie at residues 127–159 (SHPE…LVFD), 182–213 (KHTQ…SCWD), 232–263 (SHEK…HVHD), 279–310 (AHSG…ALWD), 323–354 (GHED…LVWD), and 380–411 (GHTS…QIWT).

The protein belongs to the WD repeat HIR1 family. In terms of assembly, heterotetramer of alp13, clr6, prw1 and pst2.

The protein resides in the nucleus. Its function is as follows. Has a role in chromatin assembly and chromosome segregation. Involved in the deacetylation of histones. The sequence is that of RbAp48-related WD40 repeat-containing protein prw1 (prw1) from Schizosaccharomyces pombe (strain 972 / ATCC 24843) (Fission yeast).